We begin with the raw amino-acid sequence, 133 residues long: Profilin-1 (133 aa).

It belongs to the profilin family. In terms of assembly, occurs in many kinds of cells as a complex with monomeric actin in a 1:1 ratio. As to expression, ubiquitous.

The protein localises to the cytoplasm. It localises to the cytoskeleton. In terms of biological role, binds to actin and affects the structure of the cytoskeleton. At high concentrations, profilin prevents the polymerization of actin, whereas it enhances it at low concentrations. By binding to PIP2, it inhibits the formation of IP3 and DG. The protein is Profilin-1 (PRO1) of Solanum lycopersicum (Tomato).